A 319-amino-acid chain; its full sequence is Annexin A4 (319 aa).

Position 2 is an N-acetylalanine (A2). At T7 the chain carries Phosphothreonine. The residue at position 12 (S12) is a Phosphoserine. Annexin repeat units lie at residues 14-85 (FNAM…GMMT), 86-157 (PTVL…SLSA), 169-241 (ALVR…AIVK), and 245-316 (NKSA…VLCG). K213, K293, and K300 each carry N6-acetyllysine.

This sequence belongs to the annexin family.

It is found in the zymogen granule membrane. Calcium/phospholipid-binding protein which promotes membrane fusion and is involved in exocytosis. The protein is Annexin A4 of Homo sapiens (Human).